A 431-amino-acid chain; its full sequence is MTKSAELFAKAQDKIPGGVNSPVRAFAGVGGSPIFVERADGPLIFDADGKAYIDYVGSWGPMILGHNHAAIREAVISAAQRGLSFGAPTETEITMAELVSELVPSMEQVRMVSSGTEATMSAIRLARGYTGRDKIMKFEGCYHGHADSLLVKAGSGALTLGQPSSPGVPADFAKYTLTATFNDLDSVRELFTANKGEIACIIVEPVAGNMNCIPPVEGFHEGLRQICDEEGALLIFDEVMTGFRVAENCAQGYYNIKPDLTTLGKVIGGGMPVGAFGGRKDVMQYIAPTGPVYQAGTLSGNPVAMAAGFACLKVLTEEGNEKRLADTTKHLANGFKELANKHGIPMVVNQVGGMFGFFFTDQETVTSYADVAKCDIERFKRFFHLMLKKGVYLAPSAFEASFTSLAHGPKEIEATLEAADQCFAIIASETK.

Residue K265 is modified to N6-(pyridoxal phosphate)lysine.

Belongs to the class-III pyridoxal-phosphate-dependent aminotransferase family. HemL subfamily. As to quaternary structure, homodimer. Pyridoxal 5'-phosphate serves as cofactor.

The protein resides in the cytoplasm. It catalyses the reaction (S)-4-amino-5-oxopentanoate = 5-aminolevulinate. It participates in porphyrin-containing compound metabolism; protoporphyrin-IX biosynthesis; 5-aminolevulinate from L-glutamyl-tRNA(Glu): step 2/2. In Aliivibrio fischeri (strain MJ11) (Vibrio fischeri), this protein is Glutamate-1-semialdehyde 2,1-aminomutase.